A 1193-amino-acid polypeptide reads, in one-letter code: Cysteine protease ATG4 (1193 aa).

Disordered regions lie at residues 23-284 (AAIA…NKMS) and 358-474 (WRPI…KKKS). Positions 35–49 (NLPPPPPPDRIPPPK) are enriched in pro residues. Over residues 50-59 (GRSHQQKFKI) the composition is skewed to basic residues. Basic and acidic residues-rich tracts occupy residues 60–72 (LRKE…RQPI), 117–127 (ANREEKKEKTS), and 140–153 (FGRD…KPEE). Positions 170 to 185 (SSSTSTDSTTSRSITS) are enriched in low complexity. A compositionally biased stretch (polar residues) spans 186–205 (AFTRQNSIQSRRSPRTSFGQ). The segment covering 227-238 (SSTTSHDPSSDP) has biased composition (low complexity). Composition is skewed to polar residues over residues 253 to 262 (QGASMSSLSR), 270 to 284 (GGTS…NKMS), and 389 to 447 (LSMN…STLS). Residue Cys-570 is the Nucleophile of the active site. Active-site residues include Asp-789 and His-791. Disordered regions lie at residues 807 to 869 (HSAK…SKYK), 899 to 924 (VPKS…TSTA), and 1000 to 1171 (QDEM…PARN). The segment covering 835-846 (RTPETPRSTTPS) has biased composition (low complexity). 2 stretches are compositionally biased toward acidic residues: residues 1004-1029 (PSWE…EFEE) and 1070-1084 (HLDV…DDNE). 2 stretches are compositionally biased toward basic and acidic residues: residues 1097-1112 (IARH…KREQ) and 1152-1164 (PRYE…EQER).

Belongs to the peptidase C54 family.

It localises to the cytoplasm. It is found in the nucleus. The protein resides in the preautophagosomal structure. The enzyme catalyses [protein]-C-terminal L-amino acid-glycyl-phosphatidylethanolamide + H2O = [protein]-C-terminal L-amino acid-glycine + a 1,2-diacyl-sn-glycero-3-phosphoethanolamine. In terms of biological role, cysteine protease that plays a key role in cytoplasm to vacuole transport (Cvt) and autophagy by mediating both proteolytic activation and delipidation of ATG8. Required for selective autophagic degradation of the nucleus (nucleophagy) as well as for mitophagy which contributes to regulate mitochondrial quantity and quality by eliminating the mitochondria to a basal level to fulfill cellular energy requirements and preventing excess ROS production. The protease activity is required for proteolytic activation of ATG8: cleaves the C-terminal amino acid of ATG8 to reveal a C-terminal glycine. ATG8 ubiquitin-like activity requires the exposure of the glycine at the C-terminus for its conjugation to phosphatidylethanolamine (PE) and its insertion to membranes, which is necessary for autophagy. The ATG8-PE conjugate mediates tethering between adjacent membranes and stimulates membrane hemifusion, leading to expansion of the autophagosomal membrane during autophagy. In addition to the protease activity, also catalyzes deconjugation of PE-conjugated forms of ATG8 during macroautophagy: ATG8 delipidation is required to release the protein from membranes, which facilitates multiple events during macroautophagy, and especially for efficient autophagosome biogenesis, the assembly of ATG9-containing tubulovesicular clusters into phagophores/autophagosomes, and for the disassembly of PAS-associated ATG components. ATG8 delipidation by ATG4 also recycles ATG8-PE generated on inappropriate membranes to maintain a reservoir of unlipidated ATG8 that is required for autophagosome formation at the PAS. The sequence is that of Cysteine protease ATG4 (ATG4) from Cryptococcus neoformans var. neoformans serotype D (strain JEC21 / ATCC MYA-565) (Filobasidiella neoformans).